Reading from the N-terminus, the 129-residue chain is Follitropin subunit beta (129 aa).

Positions 1 to 18 are cleaved as a signal peptide; it reads MKTVQFCFLFCCWKAICC. Disulfide bonds link cysteine 21/cysteine 69, cysteine 35/cysteine 84, cysteine 38/cysteine 122, cysteine 46/cysteine 100, cysteine 50/cysteine 102, and cysteine 105/cysteine 112. N-linked (GlcNAc...) asparagine glycans are attached at residues asparagine 25 and asparagine 42.

This sequence belongs to the glycoprotein hormones subunit beta family. As to quaternary structure, heterodimer. The active follitropin is a heterodimer composed of an alpha chain/CGA shared with other hormones and a unique beta chain/FSHB shown here.

It is found in the secreted. In terms of biological role, together with the alpha chain CGA constitutes follitropin, the follicle-stimulating hormone, and provides its biological specificity to the hormone heterodimer. Binds FSHR, a G protein-coupled receptor, on target cells to activate downstream signaling pathways. Follitropin is involved in follicle development and spermatogenesis in reproductive organs. The sequence is that of Follitropin subunit beta (FSHB) from Macaca fascicularis (Crab-eating macaque).